The following is a 1144-amino-acid chain: MGMLNCLHGNNMSGQHDIPPEVGDQPEQEPLEAQGAAAPGAGVGPAEEMETEPSNNEPIPDETDSEVCGPPEDSKSDIQSPSQAFEEVQVGGDYSPPPEEAMPFEIQQPSLGDFWPTLEQPGPSGTPSGIKAFNPAILEPGTPTGAHPGLGAYSPPPEEAMPFEFNEPAQEDRCQPPLQVPDLAPGGPEAWVSRALPAEPGNLGFENTGFREDYSPPPEESVPFQLDGEEFGGDSPPPGLPRVTPQIGIGGEFPTVAVPSTLCLAPAANAPPLWVQGAIGRPFREAVRSPNFAYDISPMEITRPLLEIGRASTGVDDDTAVNMDSPPIASDGPPIEVSGAPVKSEHAKRPPLERQAAETGNSPISSTTAEEAKVPSLERGEGSPTQPETVHIKPAPVAESGTDSSKADPDSATHAVLQIGPEEVGGVPTMPTDLPPASEDAGPDVRAEPDGGTAPATPAESEDNREPAAAAAAEPAAEPAAEPAAEPAAEPAAEPAAEAVPDTEAESASGAVPDTQEEPAAAAASATPAEPAARAAPVTPTEPATRAVPSARAHPAAGAVPGASAMSAAARAAAARAAYAGPLVWGARSLSATPAARASLPARAAAAARAASAARAVAAGRSASAAPSRAHLRPPSPEIQVADPPTPRPAPRPSAWPDKYERGRSCCRYEAASGICEIESSSDESEEGATGCFQWLLRRNRRPGQPRSHTVGSNPVRNFFARAFGSCFGLSECTRSRSLSPGKAKDPMEERRKQMRKEAMEMREQKRADKKRSKLIDKQLEEEKMDYMCTHRLLLLGAGESGKSTIVKQMRILHVNGFNGEGGEEDPQAARSNSDGEKATKVQDIKNNLKEAIETIVAAMSNLVPPVELANPENQFRVDYILSVMNVPNFDFPPEFYEHAKALWEDEGVRACYERSNEYQLIDCAQYFLDKIDVIKQADYVPSDQDLPRCRVLTSGIFETKFQVDKVNFHMFDVGGQRDERRKWIQCFNDVTAIIFVVASSSYNMVIREDNQTNRLQEALNLFKSIWNNRWLRTISVILFLNKQDLLAEKVLAGKSKIEDYFPEFARYTTPEDATPEPGEDPRVTRAKYFIRDEFLRISTASGDGRHYCYPHFTCAVDTENIRRVFNDCRDIIQRMHLRQYELL.

Disordered regions lie at residues 1–186 (MGML…LAPG), 316–558 (DDDT…PAAG), 622–657 (SASA…SAWP), and 735–772 (RSRS…DKKR). The span at 31–46 (LEAQGAAAPGAGVGPA) shows a compositional bias: low complexity. Over residues 343 to 356 (KSEHAKRPPLERQA) the composition is skewed to basic and acidic residues. The span at 358–369 (ETGNSPISSTTA) shows a compositional bias: polar residues. A compositionally biased stretch (basic and acidic residues) spans 370 to 381 (EEAKVPSLERGE). Low complexity-rich tracts occupy residues 467 to 499 (PAAA…AAEA) and 518 to 558 (EPAA…PAAG). Residues 644 to 654 (PPTPRPAPRPS) show a composition bias toward pro residues. Residues 743-767 (KAKDPMEERRKQMRKEAMEMREQKR) show a composition bias toward basic and acidic residues. Residues 745-772 (KDPMEERRKQMRKEAMEMREQKRADKKR) are a coiled coil. The G-alpha domain occupies 789–1144 (CTHRLLLLGA…RMHLRQYELL (356 aa)). The G1 motif stretch occupies residues 792-805 (RLLLLGAGESGKST). GTP is bound at residue 797–805 (GAGESGKST). Ser804 serves as a coordination point for Mg(2+). The interval 818 to 840 (FNGEGGEEDPQAARSNSDGEKAT) is disordered. Residues 837–863 (EKATKVQDIKNNLKEAIETIVAAMSNL) adopt a coiled-coil conformation. The interval 946 to 954 (DLPRCRVLT) is G2 motif. Residues 947–954 (LPRCRVLT), 973–977 (DVGGQ), and 1042–1045 (NKQD) each bind GTP. Position 951 is an ADP-ribosylarginine; by cholera toxin (Arg951). Thr954 contacts Mg(2+). The segment at 969–978 (FHMFDVGGQR) is G3 motif. The tract at residues 1038–1045 (ILFLNKQD) is G4 motif. Ser1102 carries the phosphoserine modification. The tract at residues 1114–1119 (TCAVDT) is G5 motif. Position 1116 (Ala1116) interacts with GTP.

This sequence belongs to the G-alpha family. G(s) subfamily. G proteins are composed of 3 units; alpha, beta and gamma. The alpha chain contains the guanine nucleotide binding site. Interacts through its N-terminal region with ALEX which is produced from the same locus in a different open reading frame. This interaction may inhibit its adenylyl cyclase-stimulating activity. Interacts with MAGED2. In terms of tissue distribution, enriched in neuroendocrine tissues with a particularly high level of expression in pituitary where it is abundant in intermediate and anterior lobes. In adrenal gland, found in central region containing medullary chromaffin cells but not in cortex. In cerebellum, strongly expressed in perikarya of Purkinje cells. Not detected in liver, kidney or neurohypophysis.

It is found in the cell membrane. Its subcellular location is the apical cell membrane. Guanine nucleotide-binding proteins (G proteins) function as transducers in numerous signaling pathways controlled by G protein-coupled receptors (GPCRs). Signaling involves the activation of adenylyl cyclases, resulting in increased levels of the signaling molecule cAMP. GNAS functions downstream of several GPCRs, including beta-adrenergic receptors. XLas isoforms interact with the same set of receptors as Gnas isoforms. This is Guanine nucleotide-binding protein G(s) subunit alpha isoforms XLas from Rattus norvegicus (Rat).